The chain runs to 165 residues: Lipoprotein signal peptidase (165 aa).

3 consecutive transmembrane segments (helical) span residues 12 to 32 (WLWVVVAVLIIDLGSKFLILQ), 70 to 90 (WFFAGIAVGICVVLAVLMYRS), and 102 to 122 (ALIIGGALGNLFDRLWHGFVV). Residues Asp123 and Asp141 contribute to the active site. A helical membrane pass occupies residues 137-157 (FNLADSAICIGAALIVLEGFL).

The protein belongs to the peptidase A8 family.

It is found in the cell inner membrane. It carries out the reaction Release of signal peptides from bacterial membrane prolipoproteins. Hydrolyzes -Xaa-Yaa-Zaa-|-(S,diacylglyceryl)Cys-, in which Xaa is hydrophobic (preferably Leu), and Yaa (Ala or Ser) and Zaa (Gly or Ala) have small, neutral side chains.. The protein operates within protein modification; lipoprotein biosynthesis (signal peptide cleavage). Functionally, this protein specifically catalyzes the removal of signal peptides from prolipoproteins. This chain is Lipoprotein signal peptidase, found in Klebsiella aerogenes (strain ATCC 13048 / DSM 30053 / CCUG 1429 / JCM 1235 / KCTC 2190 / NBRC 13534 / NCIMB 10102 / NCTC 10006 / CDC 819-56) (Enterobacter aerogenes).